A 514-amino-acid chain; its full sequence is 2,3-bisphosphoglycerate-independent phosphoglycerate mutase (514 aa).

Residues D14 and S64 each contribute to the Mn(2+) site. Catalysis depends on S64, which acts as the Phosphoserine intermediate. Residues H125, 155–156, R187, R193, 263–266, and K336 each bind substrate; these read RD and RADR. Residues D403, H407, D444, H445, and H463 each contribute to the Mn(2+) site.

The protein belongs to the BPG-independent phosphoglycerate mutase family. In terms of assembly, monomer. It depends on Mn(2+) as a cofactor.

It carries out the reaction (2R)-2-phosphoglycerate = (2R)-3-phosphoglycerate. It participates in carbohydrate degradation; glycolysis; pyruvate from D-glyceraldehyde 3-phosphate: step 3/5. Catalyzes the interconversion of 2-phosphoglycerate and 3-phosphoglycerate. The sequence is that of 2,3-bisphosphoglycerate-independent phosphoglycerate mutase from Salmonella typhi.